Here is a 342-residue protein sequence, read N- to C-terminus: Antihemorrhagic factor HSF (342 aa).

The signal sequence occupies residues 1 to 19 (MNSLVALVLLGQIIGSTLS). 2 Cystatin fetuin-A-type domains span residues 22–130 (VRGD…VKCH) and 141–254 (RNCS…SNCV). The Cell attachment site signature appears at 23 to 25 (RGD). The tract at residues 24–108 (GDLECDDKEA…RQQHNHAVEM (85 aa)) is indispensable for metalloproteinase inhibition. 6 disulfide bridges follow: cysteine 28–cysteine 332, cysteine 85–cysteine 96, cysteine 110–cysteine 129, cysteine 143–cysteine 146, cysteine 205–cysteine 217, and cysteine 230–cysteine 253. The N-linked (GlcNAc...) asparagine glycan is linked to asparagine 142. The N-linked (GlcNAc...) asparagine glycan is linked to asparagine 204. Asparagine 282 carries an N-linked (GlcNAc...) asparagine glycan.

Belongs to the fetuin family. Post-translationally, cys-63 may exist in a mixed disulfide form with a thiol compound such as glutathione. As to expression, expressed by the liver.

It localises to the secreted. Its function is as follows. Inhibits hemorrhagic and proteolytic activities of metalloproteinases (HR1A, HR1B, HR2a, HR2b and H2 proteinase from T.flavodidis and brevilysins H3, H4, H6 and L4 from A.halys brevicaudus). Has no effect on brevilysins H2. Has no effect on papain and cathepsin-B. In Protobothrops flavoviridis (Habu), this protein is Antihemorrhagic factor HSF.